Consider the following 239-residue polypeptide: EF-hand domain-containing protein D1 (239 aa).

Residues 1–18 show a composition bias toward basic and acidic residues; that stretch reads MASEELACKLERRLRREE. The segment at 1-53 is disordered; sequence MASEELACKLERRLRREEAEESGPQLAPLGAPAPEPKPEPEPPARAPTASADA. 2 EF-hand domains span residues 90 to 125 and 126 to 161; these read RLIKDLESMFKLYDAGRDGFIDLMELKLMMEKLGAP and QTHLGLKSMIKEVDEDFDGKLSFREFLLIFHKAAAG. The Ca(2+) site is built by aspartate 103, aspartate 107, glutamate 114, aspartate 139, aspartate 141, aspartate 143, lysine 145, and glutamate 150. A Phosphoserine modification is found at serine 201.

The protein resides in the mitochondrion inner membrane. Its function is as follows. Acts as a calcium sensor for mitochondrial flash (mitoflash) activation, an event characterized by stochastic bursts of superoxide production. May play a role in neuronal differentiation. The sequence is that of EF-hand domain-containing protein D1 (EFHD1) from Homo sapiens (Human).